The primary structure comprises 411 residues: MKHDLIRRLTTYAKIDTQSDYASTTVPTTDGQWTLARLLVDELKEIGMSDVTVDANGYVMATLPANTDADIPTIGFLAHLDTATDFTGTNVNPQIVEAYDGEDLVLNATLPVILSPKDFPALKNYVGHTLMTTDGTTLLGADNKAGIAEIMTAMHHLITHPEIKHGRIRVAFTPDEEIGRGPHHFDVAAFDAKFAYTVDGGPLGELEYESFNAAAAEIIFHGTNVHPGTAKDKMVNSQKHAMAFQNRLPGDEAPEFTDGFEGFYHLISFEGSVEKTTVQYIIRDFDRSKFEARKHFLTALVEEWNKKYGAGSVEIKLNDQYYNMREKIEPHMEIVDIAHAAMESRGVTPIIKPIRGGTDGSQLSYMGLPTPNIFTGGENYHGKFEFISVDNMVKATEVVVAIAERFAQSAK.

H79 is a binding site for Zn(2+). D81 is a catalytic residue. D142 is a Zn(2+) binding site. Catalysis depends on E176, which acts as the Proton acceptor. The Zn(2+) site is built by E177, D199, and H381.

It belongs to the peptidase M20B family. Requires Zn(2+) as cofactor.

The protein resides in the cytoplasm. It carries out the reaction Release of the N-terminal residue from a tripeptide.. In terms of biological role, cleaves the N-terminal amino acid of tripeptides. The sequence is that of Peptidase T from Exiguobacterium sibiricum (strain DSM 17290 / CCUG 55495 / CIP 109462 / JCM 13490 / 255-15).